Here is a 282-residue protein sequence, read N- to C-terminus: Reaction center protein L chain (282 aa).

Over 2-32 (ALLSFERKYRVPGGTLVGGNLFDFWVGPFYV) the chain is Cytoplasmic. A helical transmembrane segment spans residues 33 to 56 (GFFGVATFFFAALGIILIAWSAVL). Over 57–83 (QGTWNPQLISVYPPALEYGLGGAPLAK) the chain is Periplasmic. Residues 84-112 (GGLWQIITICATGAFVSWALREVEICRKL) traverse the membrane as a helical segment. At 113–116 (GIGY) the chain is on the cytoplasmic side. Residues 117–139 (HIPFAFAFAILAYLTLVLFRPVM) form a helical membrane-spanning segment. Topologically, residues 140-171 (MGAWGYAFPYGIWTHLDWVSNTGYTYGNFHYN) are periplasmic. The (7R,8Z)-bacteriochlorophyll b site is built by His154 and His174. The helical transmembrane segment at 172–199 (PAHMIAISFFFTNALALALHGALVLSAA) threads the bilayer. His191 contacts Fe cation. The Cytoplasmic segment spans residues 200 to 225 (NPEKGKEMRTPDHEDTFFRDLVGYSI). A ubiquinone is bound at residue Phe217. The helical transmembrane segment at 226-251 (GTLGIHRLGLLLSLSAVFFSALCMII) threads the bilayer. Fe cation is bound at residue His231. Residues 252-282 (TGTIWFDQWVDWWQWWVKLPWWANIPGGING) are Periplasmic-facing.

Belongs to the reaction center PufL/M/PsbA/D family. Reaction center is composed of four bacteriochlorophylls, two bacteriopheophytins, two ubiquinones, one iron, and three highly hydrophobic polypeptide chains (designated L, M, and H).

The protein resides in the cellular chromatophore membrane. Functionally, the reaction center is a membrane-bound complex that mediates the initial photochemical event in the electron transfer process of photosynthesis. In Cereibacter sphaeroides (strain ATCC 17023 / DSM 158 / JCM 6121 / CCUG 31486 / LMG 2827 / NBRC 12203 / NCIMB 8253 / ATH 2.4.1.) (Rhodobacter sphaeroides), this protein is Reaction center protein L chain (pufL).